Reading from the N-terminus, the 171-residue chain is Group 1 truncated hemoglobin LI410 (171 aa).

The N-terminal 23 residues, 1-23, are a transit peptide targeting the chloroplast; the sequence is MMRTVQLRTLRPCIRAQQQPVRA. The heme site is built by tyrosine 63 and histidine 111.

Belongs to the truncated hemoglobin family. Group I subfamily. The cofactor is heme.

Its subcellular location is the plastid. The protein localises to the chloroplast. This is Group 1 truncated hemoglobin LI410 (LI410) from Chlamydomonas moewusii (Chlamydomonas eugametos).